We begin with the raw amino-acid sequence, 547 residues long: uncharacterized protein (547 aa).

To B.pertussis prn N-terminal region.

This is an uncharacterized protein from Escherichia coli O157:H7.